We begin with the raw amino-acid sequence, 382 residues long: Glycerate dehydrogenase (382 aa).

Residues 175–176 (RI), 271–273 (CSR), and Asp297 each bind NAD(+). Arg273 is a catalytic residue. Glu302 is a catalytic residue. His320 functions as the Proton donor in the catalytic mechanism. Residue 320–323 (HIAS) participates in NAD(+) binding.

Belongs to the D-isomer specific 2-hydroxyacid dehydrogenase family.

The protein localises to the peroxisome. It catalyses the reaction (R)-glycerate + NAD(+) = 3-hydroxypyruvate + NADH + H(+). It functions in the pathway photosynthesis; photorespiration; 3-phospho-D-glycerate from glycine: step 3/4. This chain is Glycerate dehydrogenase (HPR-A), found in Cucumis sativus (Cucumber).